We begin with the raw amino-acid sequence, 75 residues long: UPF0154 protein MYPE400 (75 aa).

A helical membrane pass occupies residues 5–27 (IGLCLGLGIPISLIIGAVIGYYF).

The protein belongs to the UPF0154 family.

The protein localises to the membrane. The protein is UPF0154 protein MYPE400 of Malacoplasma penetrans (strain HF-2) (Mycoplasma penetrans).